We begin with the raw amino-acid sequence, 388 residues long: tRNA (guanine(26)-N(2))-dimethyltransferase (388 aa).

In terms of domain architecture, Trm1 methyltransferase spans 4 to 383 (RTIVEGTTKI…APIAEIKKII (380 aa)). The S-adenosyl-L-methionine site is built by Arg-41, Arg-78, Asp-94, and Ala-123. The Zn(2+) site is built by Cys-251, Cys-254, Cys-271, and Cys-274.

This sequence belongs to the class I-like SAM-binding methyltransferase superfamily. Trm1 family.

The enzyme catalyses guanosine(26) in tRNA + 2 S-adenosyl-L-methionine = N(2)-dimethylguanosine(26) in tRNA + 2 S-adenosyl-L-homocysteine + 2 H(+). In terms of biological role, dimethylates a single guanine residue at position 26 of a number of tRNAs using S-adenosyl-L-methionine as donor of the methyl groups. This chain is tRNA (guanine(26)-N(2))-dimethyltransferase, found in Methanosarcina mazei (strain ATCC BAA-159 / DSM 3647 / Goe1 / Go1 / JCM 11833 / OCM 88) (Methanosarcina frisia).